The following is a 506-amino-acid chain: Histidine ammonia-lyase (506 aa).

Positions 141–143 (ASG) form a cross-link, 5-imidazolinone (Ala-Gly). Position 142 is a 2,3-didehydroalanine (Ser) (Ser142).

Belongs to the PAL/histidase family. Contains an active site 4-methylidene-imidazol-5-one (MIO), which is formed autocatalytically by cyclization and dehydration of residues Ala-Ser-Gly.

Its subcellular location is the cytoplasm. The catalysed reaction is L-histidine = trans-urocanate + NH4(+). The protein operates within amino-acid degradation; L-histidine degradation into L-glutamate; N-formimidoyl-L-glutamate from L-histidine: step 1/3. This is Histidine ammonia-lyase from Burkholderia multivorans (strain ATCC 17616 / 249).